A 150-amino-acid polypeptide reads, in one-letter code: Large ribosomal subunit protein uL15 (150 aa).

Residues 1–57 (MTIKLESLQSNKGSRRKKMRKGRGIAAGQGASCGFGMRGQKSRSGRPTRPGFEGGQM) are disordered. Residues 13 to 23 (GSRRKKMRKGR) are compositionally biased toward basic residues. Over residues 25-37 (IAAGQGASCGFGM) the composition is skewed to gly residues.

Belongs to the universal ribosomal protein uL15 family. As to quaternary structure, part of the 50S ribosomal subunit.

In terms of biological role, binds to the 23S rRNA. This chain is Large ribosomal subunit protein uL15, found in Prochlorococcus marinus (strain NATL1A).